We begin with the raw amino-acid sequence, 422 residues long: Bifunctional enzyme IspD/IspF (422 aa).

A 2-C-methyl-D-erythritol 4-phosphate cytidylyltransferase region spans residues 1–267; the sequence is MAVGLLLLAA…PISALSMPLP (267 aa). The interval 268-422 is 2-C-methyl-D-erythritol 2,4-cyclodiphosphate synthase; the sequence is LIGVGIDFHK…AIAVAQIYHR (155 aa). A divalent metal cation-binding residues include D274 and H276. 4-CDP-2-C-methyl-D-erythritol 2-phosphate contacts are provided by residues 274–276 and 301–302; these read DFH and HS. Residue H309 participates in a divalent metal cation binding. Residues 323–325, F404, and R407 contribute to the 4-CDP-2-C-methyl-D-erythritol 2-phosphate site; that span reads DIG.

It in the N-terminal section; belongs to the IspD/TarI cytidylyltransferase family. IspD subfamily. The protein in the C-terminal section; belongs to the IspF family. It depends on a divalent metal cation as a cofactor.

The catalysed reaction is 2-C-methyl-D-erythritol 4-phosphate + CTP + H(+) = 4-CDP-2-C-methyl-D-erythritol + diphosphate. It carries out the reaction 4-CDP-2-C-methyl-D-erythritol 2-phosphate = 2-C-methyl-D-erythritol 2,4-cyclic diphosphate + CMP. It functions in the pathway isoprenoid biosynthesis; isopentenyl diphosphate biosynthesis via DXP pathway; isopentenyl diphosphate from 1-deoxy-D-xylulose 5-phosphate: step 2/6. Its pathway is isoprenoid biosynthesis; isopentenyl diphosphate biosynthesis via DXP pathway; isopentenyl diphosphate from 1-deoxy-D-xylulose 5-phosphate: step 4/6. Its function is as follows. Bifunctional enzyme that catalyzes the formation of 4-diphosphocytidyl-2-C-methyl-D-erythritol from CTP and 2-C-methyl-D-erythritol 4-phosphate (MEP) (IspD), and catalyzes the conversion of 4-diphosphocytidyl-2-C-methyl-D-erythritol 2-phosphate (CDP-ME2P) to 2-C-methyl-D-erythritol 2,4-cyclodiphosphate (ME-CPP) with a corresponding release of cytidine 5-monophosphate (CMP) (IspF). The chain is Bifunctional enzyme IspD/IspF from Tropheryma whipplei (strain TW08/27) (Whipple's bacillus).